We begin with the raw amino-acid sequence, 239 residues long: SKA complex subunit 1 (239 aa).

A disordered region spans residues 87-115 (PDSVPQKSTRPCLDDEKEGSSVVQPPESG). The segment at 116-239 (NRHVQLISEQ…RCGPLTFYYA (124 aa)) is microtubule binding.

This sequence belongs to the SKA1 family. Component of the SKA complex, composed of two copies of ska-1 and a single copy of ska-3. The core complex associates with microtubules and may form dimeric assemblies. Interacts with ska-3 and microtubules.

Its subcellular location is the cytoplasm. The protein resides in the cytoskeleton. The protein localises to the spindle. It is found in the chromosome. It localises to the centromere. Its subcellular location is the kinetochore. Its function is as follows. Component of the SKA complex, a microtubule plus end-binding complex of the outer kinetochore that stabilizes spindle microtubule-kinetochore attachments, promotes alignment of chromosomes at the mitotic spindle equator (chromosome congression) and assists suppression of the spindle assembly checkpoint. Kinetochores, consisting of a centromere-associated inner segment and a microtubule-contacting outer segment, play a crucial role in chromosome segregation by mediating the physical connection between centromeric DNA and spindle microtubules. The outer kinetochore is made up of the ten-subunit KMN network complex, comprising the MIS12, NDC80 and KNL1 complexes, and auxiliary microtubule-associated components such as the SKA complex; together they connect the outer kinetochore with the inner kinetochore, bind microtubules, and mediate interactions with mitotic checkpoint proteins that delay anaphase until chromosomes are bioriented on the spindle. The SKA complex is loaded onto bioriented kinetochores and it facilitates chromosome congression by stabilizing microtubules and end-on attachment of the NDC80 complex to depolymerizing spindle microtubules, thereby assisting the poleward-moving kinetochore in withstanding microtubule pulling forces. The complex associates with dynamic microtubule plus-ends and can track both depolymerizing and elongating microtubules. The complex recruits protein phosphatase 1 (PP1) to the kinetochore in prometaphase and metaphase, to oppose spindle assembly checkpoint signaling and promote the onset of anaphase. In the complex, it mediates interactions with microtubules. During meiosis the SKA complex stabilizes the meiotic spindle and is required for its migration to the cortex. The polypeptide is SKA complex subunit 1 (Caenorhabditis briggsae).